A 100-amino-acid chain; its full sequence is Integration host factor subunit alpha (100 aa).

Residues 53 to 72 form a disordered region; the sequence is FDLRDKRQRPGRNPKTGEEI.

This sequence belongs to the bacterial histone-like protein family. As to quaternary structure, heterodimer of an alpha and a beta chain.

In terms of biological role, this protein is one of the two subunits of integration host factor, a specific DNA-binding protein that functions in genetic recombination as well as in transcriptional and translational control. The chain is Integration host factor subunit alpha from Pseudomonas putida (strain ATCC 700007 / DSM 6899 / JCM 31910 / BCRC 17059 / LMG 24140 / F1).